A 417-amino-acid polypeptide reads, in one-letter code: Cobalamin binding intrinsic factor (417 aa).

Residues 1–18 (MAWFALYLLSLLWATAGT) form the signal peptide. Disulfide bonds link Cys26-Cys246, Cys103-Cys288, and Cys143-Cys182. Asp171 is a cob(II)alamin binding site. Ser191 carries the phosphoserine modification. The cob(II)alamin site is built by Asp222 and Gln270. Residues Asn311, Asn330, and Asn334 are each glycosylated (N-linked (GlcNAc...) asparagine). Residues 365-370 (SWGLVV) and 386-395 (WQFLSGVTPL) each bind cob(II)alamin. The N-linked (GlcNAc...) asparagine glycan is linked to Asn413.

Belongs to the eukaryotic cobalamin transport proteins family. Interacts with CUBN (via CUB domains). In terms of tissue distribution, gastric mucosa.

The protein localises to the secreted. In terms of biological role, promotes absorption of the essential vitamin cobalamin (Cbl) in the ileum. After interaction with CUBN, the CBLIF-cobalamin complex is internalized via receptor-mediated endocytosis. The chain is Cobalamin binding intrinsic factor from Homo sapiens (Human).